Consider the following 715-residue polypeptide: Scinderin (715 aa).

The actin-severing stretch occupies residues 1-363; it reads MARELYHEEF…DGFGKVYVTE (363 aa). Residues 27 to 76 form a Gelsolin-like 1 repeat; the sequence is LELVPVPQSAHGDFYVGDAYLVLHTAKTSRGFTYHLHFWLGKECSQDEST. Residue tyrosine 102 is modified to Phosphotyrosine. A 1,2-diacyl-sn-glycero-3-phospho-(1D-myo-inositol-4,5-bisphosphate) contacts are provided by residues 112–119 and 138–146; these read KGGLKYKA and RLLHVKGRR. Gelsolin-like repeat units lie at residues 148–188, 265–307, 398–451, and 523–564; these read VRAT…YERL, VVAE…QERK, VEIW…DELT, and TRIV…EEEK. Positions 364–715 are ca(2+)-dependent actin binding; that stretch reads KVAQIKQIPF…WFLGWDSSKW (352 aa). Ca(2+) contacts are provided by asparagine 538, aspartate 539, and glutamate 562. Position 599 is a phosphotyrosine (tyrosine 599). A Gelsolin-like 6 repeat occupies 626–668; sequence FVIEEIPGEFTQDDLAEDDVMLLDAWEQIFIWIGKDANEVEKK. Ca(2+) contacts are provided by aspartate 643, aspartate 644, and glutamate 666.

This sequence belongs to the villin/gelsolin family. In terms of tissue distribution, expressed in megakaryocytes.

The protein localises to the cytoplasm. It localises to the cytoskeleton. It is found in the cell projection. The protein resides in the podosome. Ca(2+)-dependent actin filament-severing protein that has a regulatory function in exocytosis by affecting the organization of the microfilament network underneath the plasma membrane. Severing activity is inhibited by phosphatidylinositol 4,5-bis-phosphate (PIP2). In vitro, also has barbed end capping and nucleating activities in the presence of Ca(2+). Required for megakaryocyte differentiation, maturation, polyploidization and apoptosis with the release of platelet-like particles. Plays a role in osteoclastogenesis (OCG) and actin cytoskeletal organization in osteoclasts. Regulates chondrocyte proliferation and differentiation. Inhibits cell proliferation and tumorigenesis. Signaling is mediated by MAPK, p38 and JNK pathways. This is Scinderin from Homo sapiens (Human).